A 564-amino-acid polypeptide reads, in one-letter code: E3 ubiquitin-protein ligase hrd-like protein 1 (564 aa).

The helical transmembrane segment at serine 17–phenylalanine 37 threads the bilayer. The N-linked (GlcNAc...) asparagine glycan is linked to asparagine 53. Helical transmembrane passes span tyrosine 61–leucine 81, leucine 86–isoleucine 106, glutamine 123–glutamine 143, valine 148–threonine 168, lysine 185–serine 205, proline 215–phenylalanine 235, and leucine 272–leucine 292. The segment at cysteine 335–arginine 373 adopts an RING-type; atypical zinc-finger fold. The CUE domain occupies glutamine 432 to isoleucine 474.

It localises to the membrane. Proposed to have a role in neuroprotection. The protein is E3 ubiquitin-protein ligase hrd-like protein 1 (hrdl-1) of Caenorhabditis elegans.